We begin with the raw amino-acid sequence, 148 residues long: Ribonuclease H (148 aa).

Residues alanine 3 to glutamate 144 enclose the RNase H type-1 domain. Mg(2+) is bound by residues aspartate 12, glutamate 50, aspartate 72, and aspartate 136. Positions histidine 129 to glycine 148 are disordered.

It belongs to the RNase H family. As to quaternary structure, monomer. Requires Mg(2+) as cofactor.

The protein localises to the cytoplasm. It catalyses the reaction Endonucleolytic cleavage to 5'-phosphomonoester.. Its function is as follows. Endonuclease that specifically degrades the RNA of RNA-DNA hybrids. In Dechloromonas aromatica (strain RCB), this protein is Ribonuclease H.